The sequence spans 935 residues: ABC transporter A family member 7 (935 aa).

The next 7 membrane-spanning stretches (helical) occupy residues 34-54 (LIMIPFYLCILLVIIQILFDT), 338-358 (IASLIGPLFFTWVILLLFPVI), 392-412 (FLTISVLYVICLMIFGSAIGL), 424-444 (FVFYFLYLNLQIALAFLVSSV), 454-474 (ASYIYVFGSGLLGLFLLNFLI), 483-503 (WIIVMELYPGFSLYRGLYELA), and 528-548 (DDVFYIIVVEWFLALIAAYYI). Residues 571-591 (SLRRPSLQRQGSKVSVDMEKP) are disordered. The ABC transporter domain occupies 613–850 (IVCDNLKKVY…YGGSYVFTMT (238 aa)). 651-658 (GPNGAGKT) contacts ATP.

The protein belongs to the ABC transporter superfamily. ABCA family. CPR flippase (TC 3.A.1.211) subfamily.

The protein localises to the membrane. The chain is ABC transporter A family member 7 (ABCA7) from Arabidopsis thaliana (Mouse-ear cress).